The sequence spans 202 residues: MDKFVKLTGVAAPLPVVNVDTDMIIPKDYLKTIKRTGLGTGLFAEARYNEDGSPNQDFVLNKPAYQNAKILVAGDNFGCGSSREHAPWALLDFGIRCVISTSFADIFYNNCFKNGILPIKVSQEDLDKLMDDASRGSNAILTIDLENLEITGPDGGSLKFELDEFKRHCLLNGLDDIGLTLEKASAIDKFEKSNAAAHPWAA.

Belongs to the LeuD family. LeuD type 1 subfamily. In terms of assembly, heterodimer of LeuC and LeuD.

It carries out the reaction (2R,3S)-3-isopropylmalate = (2S)-2-isopropylmalate. It functions in the pathway amino-acid biosynthesis; L-leucine biosynthesis; L-leucine from 3-methyl-2-oxobutanoate: step 2/4. Functionally, catalyzes the isomerization between 2-isopropylmalate and 3-isopropylmalate, via the formation of 2-isopropylmaleate. This Rhizobium rhizogenes (strain K84 / ATCC BAA-868) (Agrobacterium radiobacter) protein is 3-isopropylmalate dehydratase small subunit.